A 139-amino-acid chain; its full sequence is Ribonuclease P protein component (139 aa).

The interval 120-139 (KPTTGVEYSPKNEKCESVLP) is disordered. Positions 129-139 (PKNEKCESVLP) are enriched in basic and acidic residues.

Belongs to the RnpA family. In terms of assembly, consists of a catalytic RNA component (M1 or rnpB) and a protein subunit.

The enzyme catalyses Endonucleolytic cleavage of RNA, removing 5'-extranucleotides from tRNA precursor.. RNaseP catalyzes the removal of the 5'-leader sequence from pre-tRNA to produce the mature 5'-terminus. It can also cleave other RNA substrates such as 4.5S RNA. The protein component plays an auxiliary but essential role in vivo by binding to the 5'-leader sequence and broadening the substrate specificity of the ribozyme. The polypeptide is Ribonuclease P protein component (Chlamydia caviae (strain ATCC VR-813 / DSM 19441 / 03DC25 / GPIC) (Chlamydophila caviae)).